The sequence spans 55 residues: Transcriptional regulator CdrS (55 aa).

This sequence belongs to the CdrS family.

It is found in the cytoplasm. Functionally, transcriptional regulator which plays a central role in the regulation of cell division. Activates the expression of the gene encoding the cell division protein FtsZ2, and of other genes encoding proteins predicted to function in critical aspects of cell division. Required for normal cell division but not for cell elongation. May act during the transition from stasis to growth. The CdrSL-FtsZ2 transcriptional network might coordinate cell division timing with cell growth. The chain is Transcriptional regulator CdrS from Halobacterium salinarum (strain ATCC 700922 / JCM 11081 / NRC-1) (Halobacterium halobium).